A 156-amino-acid polypeptide reads, in one-letter code: Persephin (156 aa).

The N-terminal stretch at 1-21 is a signal peptide; the sequence is MAVGKFLLGSLLLLSLQLGQG. Cystine bridges form between Cys66–Cys124, Cys93–Cys152, and Cys97–Cys154.

The protein belongs to the TGF-beta family. GDNF subfamily. In terms of assembly, homodimer; disulfide-linked. Interacts with GFRA4 coreceptor and RET: forms a 2:2:2 ternary complex composed of PSPN ligand, GFRA4 and RET receptor.

Its subcellular location is the secreted. In terms of biological role, growth factor that exhibits neurotrophic activity on mesencephalic dopaminergic and motor neurons. Acts by binding to its coreceptor, GFRA4, leading to autophosphorylation and activation of the RET receptor. In Homo sapiens (Human), this protein is Persephin.